The primary structure comprises 1193 residues: Pyruvate carboxylase (1193 aa).

Positions 41 to 493 constitute a Biotin carboxylation domain; the sequence is QFQKILVANR…WTTFIDDTTE (453 aa). The ATP site is built by K159, E243, and H278. Residues 163–360 form the ATP-grasp domain; the sequence is RQLAIRCNVP…IVAAQIQIAA (198 aa). R335 is an active-site residue. Residues 579–847 enclose the Pyruvate carboxyltransferase domain; it reads CLIMDTTWRD…DPGLNSAHVR (269 aa). Substrate contacts are provided by residues 587–591 and R660; that span reads RDAHQ. D588 is an a divalent metal cation binding site. 3 residues coordinate a divalent metal cation: K756, H786, and H788. An N6-carboxylysine modification is found at K756. T921 lines the substrate pocket. A Biotinyl-binding domain is found at 1116-1191; it reads KADVGDSSQV…DGQDLVCKIT (76 aa). The residue at position 1157 (K1157) is an N6-biotinyllysine.

It depends on biotin as a cofactor. Zn(2+) is required as a cofactor.

Its subcellular location is the cytoplasm. The enzyme catalyses hydrogencarbonate + pyruvate + ATP = oxaloacetate + ADP + phosphate + H(+). It functions in the pathway carbohydrate biosynthesis; gluconeogenesis. Pyruvate carboxylase catalyzes a 2-step reaction, involving the ATP-dependent carboxylation of the covalently attached biotin in the first step and the transfer of the carboxyl group to pyruvate in the second. This chain is Pyruvate carboxylase (pyc), found in Aspergillus terreus (strain NIH 2624 / FGSC A1156).